Here is an 87-residue protein sequence, read N- to C-terminus: Cell division topological specificity factor (87 aa).

It belongs to the MinE family.

Its function is as follows. Prevents the cell division inhibition by proteins MinC and MinD at internal division sites while permitting inhibition at polar sites. This ensures cell division at the proper site by restricting the formation of a division septum at the midpoint of the long axis of the cell. This chain is Cell division topological specificity factor, found in Herpetosiphon aurantiacus (strain ATCC 23779 / DSM 785 / 114-95).